The chain runs to 263 residues: 3-deoxy-manno-octulosonate cytidylyltransferase (263 aa).

This sequence belongs to the KdsB family.

It is found in the cytoplasm. The enzyme catalyses 3-deoxy-alpha-D-manno-oct-2-ulosonate + CTP = CMP-3-deoxy-beta-D-manno-octulosonate + diphosphate. The protein operates within nucleotide-sugar biosynthesis; CMP-3-deoxy-D-manno-octulosonate biosynthesis; CMP-3-deoxy-D-manno-octulosonate from 3-deoxy-D-manno-octulosonate and CTP: step 1/1. It functions in the pathway bacterial outer membrane biogenesis; lipopolysaccharide biosynthesis. Its function is as follows. Activates KDO (a required 8-carbon sugar) for incorporation into bacterial lipopolysaccharide in Gram-negative bacteria. The chain is 3-deoxy-manno-octulosonate cytidylyltransferase from Burkholderia vietnamiensis (strain G4 / LMG 22486) (Burkholderia cepacia (strain R1808)).